Reading from the N-terminus, the 268-residue chain is Zwei Ig domain protein zig-8 (268 aa).

The first 21 residues, M1–G21, serve as a signal peptide directing secretion. Ig-like C2-type domains lie at P40–Y128 and P140–T251. A disulfide bridge connects residues C57 and C118. N82, N155, N164, and N191 each carry an N-linked (GlcNAc...) asparagine glycan. A disulfide bridge connects residues C165 and C226.

As to expression, expressed in PVT neurons and pharyngeal muscles.

It localises to the secreted. Its function is as follows. Together with zig-5, required postembryonically to maintain the position of ASI and ASH head neuron cell bodies and ventral nerve cord axons of PVQ, PVP and HSN neurons by preventing their displacement that could occur during body growth and movement. May act by reducing L1CAM-like protein sax-7 (long isoform) adhesion. The polypeptide is Zwei Ig domain protein zig-8 (Caenorhabditis elegans).